The chain runs to 298 residues: Distal tail protein (298 aa).

This sequence belongs to the skunalikevirus distal tail protein family. In terms of assembly, homohexamer. Interacts with the receptor binding protein.

It localises to the virion. Forms the distal part of the tail. Self-associates as two rings organized back to back, with a central channel allowing DNA ejection. This Lactococcus phage SK1 (Lactococcus lactis bacteriophage SK1) protein is Distal tail protein.